A 26-amino-acid chain; its full sequence is Superoxide dismutase [Cu-Zn] (26 aa).

Residue cysteine 7 is the site of S-palmitoyl cysteine attachment.

This sequence belongs to the Cu-Zn superoxide dismutase family. Homotrimer. Requires Cu cation as cofactor. The cofactor is Zn(2+).

The protein localises to the cytoplasm. It is found in the nucleus. It carries out the reaction 2 superoxide + 2 H(+) = H2O2 + O2. Functionally, destroys radicals which are normally produced within the cells and which are toxic to biological systems. This chain is Superoxide dismutase [Cu-Zn] (sod1), found in Paralichthys olivaceus (Bastard halibut).